The following is a 526-amino-acid chain: Probable Xaa-Pro aminopeptidase GLRG_02280 (526 aa).

Residues D285, D296, E454, and E495 each contribute to the Mn(2+) site.

This sequence belongs to the peptidase M24B family. Mn(2+) is required as a cofactor.

The enzyme catalyses Release of any N-terminal amino acid, including proline, that is linked to proline, even from a dipeptide or tripeptide.. Functionally, catalyzes the removal of a penultimate prolyl residue from the N-termini of peptides. This is Probable Xaa-Pro aminopeptidase GLRG_02280 from Colletotrichum graminicola (strain M1.001 / M2 / FGSC 10212) (Maize anthracnose fungus).